A 361-amino-acid polypeptide reads, in one-letter code: Peptide chain release factor 1 (361 aa).

Gln-236 bears the N5-methylglutamine mark. Residues 285-309 (NAKDSARAADRKAQVGSGDRSERIR) are compositionally biased toward basic and acidic residues. Residues 285–312 (NAKDSARAADRKAQVGSGDRSERIRTYN) are disordered.

The protein belongs to the prokaryotic/mitochondrial release factor family. Methylated by PrmC. Methylation increases the termination efficiency of RF1.

Its subcellular location is the cytoplasm. Functionally, peptide chain release factor 1 directs the termination of translation in response to the peptide chain termination codons UAG and UAA. The chain is Peptide chain release factor 1 from Methylobacterium radiotolerans (strain ATCC 27329 / DSM 1819 / JCM 2831 / NBRC 15690 / NCIMB 10815 / 0-1).